Consider the following 143-residue polypeptide: MAPPTLITANCCCETEVKYFKYCSTSLFVLILFNSWITVDLVAEKPLVDETYLFEYPTFFLVNATDGGALKGTDANPAMVDLFNEDTNFWNLEALSLFVETSKLADGIMMQTYFSLQISLSFAFSGICVKYITGLKNNIQKCS.

The next 2 helical transmembrane spans lie at 20 to 39 and 113 to 135; these read FKYCSTSLFVLILFNSWITV and YFSLQISLSFAFSGICVKYITGL.

It is found in the membrane. This is an uncharacterized protein from Saccharomyces cerevisiae (strain ATCC 204508 / S288c) (Baker's yeast).